The following is a 749-amino-acid chain: Probable galactinol--sucrose galactosyltransferase 6 (749 aa).

Belongs to the glycosyl hydrolases 36 family.

The catalysed reaction is alpha-D-galactosyl-(1-&gt;3)-1D-myo-inositol + sucrose = raffinose + myo-inositol. Functionally, transglycosidase operating by a ping-pong reaction mechanism. Involved in the synthesis of raffinose, a major soluble carbohydrate in seeds, roots and tubers. The chain is Probable galactinol--sucrose galactosyltransferase 6 (RFS6) from Arabidopsis thaliana (Mouse-ear cress).